The primary structure comprises 815 residues: MQYDPKAIEQKWQNEWKEKNAFEPQENYSKEKMYVLSMFPYPSGRIHMGHVRNYTIGDAIARYYRKTGANVLHPIGWDAFGMPAENAAIKHKVHPKKWTYENIDYMRKELDALGLSFSHDREFATCDPLYSKWEQSFIIDMWNRGLLYRKKAAVNWCPHDKTVLANEQVIEGRCWRCDTEVVQKEIEQYFLKITDYAQELLEDLKKLEGNWPNQVIAMQRNWIGRSEGLEFRLHFDETSAKKAGIDGFEVFTTRPDTIYGVTYTALAPEHPVVKHLIETKQLSDEAVQKICTMQNQNARTRQQAEKEGLFLDLYVIHPLTKQKIPVWVANFVLAEYGSGAVMAVPAHDERDFEFAHKYNLPIKYIIKPKEGELDTTKAYTEPGILFDSGEFSGFESSEAKQKIIEYFEENGIGKRSVNYKLKDWLVSRQRYWGTPIPLIKCPKCGIVPEKKENLPVTLPEDVEITGEGNPLELHPTWKKTTCPKCGGEAERETDTLDTFVESSWYFLRYTTPRKYWEEVPFRKEDTDYWMPVDQYIGGIEHAILHLLYARFFTKVLRDLGYVNLDEPFKRLLTQGMVLKDGAKMSKSKGNTVDPDEIVAKFGADTARLFILFAAPPAKELEWSDSAVEGAYRFIKRFFERSQNAYKTKSLPKIDQKSLSKEEKEARKKVYEALQKSTDVYTKSFSFNTLIAASMEALNALNGQNNPDIWTEGYWVLTNILEPIIPHTCWEISHNLFERNNFTRLQLDPAALEEDSVTLAVTVNGKRRAEIEVPKDASKEEILAKAKEIAKKWIDGKTIVKEIVVPGRLVNIVVKG.

The short motif at 40–50 is the 'HIGH' region element; the sequence is PYPSGRIHMGH. A 'KMSKS' region motif is present at residues 583–587; sequence KMSKS. K586 is an ATP binding site.

Belongs to the class-I aminoacyl-tRNA synthetase family.

It localises to the cytoplasm. The catalysed reaction is tRNA(Leu) + L-leucine + ATP = L-leucyl-tRNA(Leu) + AMP + diphosphate. The polypeptide is Leucine--tRNA ligase (Nitratiruptor sp. (strain SB155-2)).